A 63-amino-acid chain; its full sequence is Large ribosomal subunit protein uL30 (63 aa).

It belongs to the universal ribosomal protein uL30 family. As to quaternary structure, part of the 50S ribosomal subunit.

The polypeptide is Large ribosomal subunit protein uL30 (Rickettsia peacockii (strain Rustic)).